We begin with the raw amino-acid sequence, 1227 residues long: Protein U7 (1227 aa).

Belongs to the herpesviridae US22 family.

The chain is Protein U7 (U7/U5) from Homo sapiens (Human).